Consider the following 291-residue polypeptide: Small ribosomal subunit protein uS2 (291 aa).

Residues 255-291 form a disordered region; it reads AGAATGEWSEAQGAQWETGTGAPAADWAAEPAKESSW.

This sequence belongs to the universal ribosomal protein uS2 family. Component of the small ribosomal subunit. Mature ribosomes consist of a small (40S) and a large (60S) subunit. The 40S subunit contains about 33 different proteins and 1 molecule of RNA (18S). The 60S subunit contains about 49 different proteins and 3 molecules of RNA (25S, 5.8S and 5S). Interacts with RPS21.

It localises to the cytoplasm. Required for the assembly and/or stability of the 40S ribosomal subunit. Required for the processing of the 20S rRNA-precursor to mature 18S rRNA in a late step of the maturation of 40S ribosomal subunits. This is Small ribosomal subunit protein uS2 from Podospora anserina (strain S / ATCC MYA-4624 / DSM 980 / FGSC 10383) (Pleurage anserina).